The following is a 510-amino-acid chain: Cytochrome P450 monooxygenase AFLA_114810 (510 aa).

A signal peptide spans 1–17 (MLILLGLLCLYTGLYVA). Residue C444 coordinates heme.

Belongs to the cytochrome P450 family. Heme serves as cofactor.

It participates in secondary metabolite biosynthesis. Functionally, cytochrome P450 monooxygenase; part of the gene cluster 41 that mediates the biosynthesis of an extracellular and diffusible metabolite that is able to stimulate colony sclerotial production. The sequence is that of Cytochrome P450 monooxygenase AFLA_114810 from Aspergillus flavus (strain ATCC 200026 / FGSC A1120 / IAM 13836 / NRRL 3357 / JCM 12722 / SRRC 167).